The sequence spans 337 residues: ATP-dependent 6-phosphofructokinase (337 aa).

Gly-11 is a binding site for ATP. 21 to 25 (RAVVR) is an ADP binding site. Residues 72–73 (RY) and 102–105 (GDGS) contribute to the ATP site. Asp-103 lines the Mg(2+) pocket. 125 to 127 (TID) contributes to the substrate binding site. The Proton acceptor role is filled by Asp-127. Residue Arg-154 participates in ADP binding. Residues Arg-162 and 169 to 171 (MGR) each bind substrate. ADP is bound by residues 185–187 (GAD), Lys-212, and 214–216 (KNH). Substrate is bound by residues Glu-223, Arg-245, and 251–254 (HILR).

It belongs to the phosphofructokinase type A (PFKA) family. ATP-dependent PFK group I subfamily. Prokaryotic clade 'B1' sub-subfamily. Homotetramer. Mg(2+) serves as cofactor.

Its subcellular location is the cytoplasm. The catalysed reaction is beta-D-fructose 6-phosphate + ATP = beta-D-fructose 1,6-bisphosphate + ADP + H(+). The protein operates within carbohydrate degradation; glycolysis; D-glyceraldehyde 3-phosphate and glycerone phosphate from D-glucose: step 3/4. Allosterically activated by ADP and other diphosphonucleosides, and allosterically inhibited by phosphoenolpyruvate. Catalyzes the phosphorylation of D-fructose 6-phosphate to fructose 1,6-bisphosphate by ATP, the first committing step of glycolysis. This chain is ATP-dependent 6-phosphofructokinase, found in Streptococcus pyogenes serotype M28 (strain MGAS6180).